Reading from the N-terminus, the 202-residue chain is MSRYRGPRVKIIRRPGVSPGLTSKTLKSKSNYIDRSTSNKKVSQYRVRLEEKQKLRFHYGLTERQLLKYVRIARKAKGSTGQVLLQLLEMRLDNTIFRLGMAPTIPGARQLVNHGHISMNNNIIDIPSYNREPGDIITIRNKLESRSMISKNINLFQKLKMPSHLSFDLTGLQGSVNQMVNREWVNLKINELLVVEYYSRQV.

The disordered stretch occupies residues 13 to 37 (RRPGVSPGLTSKTLKSKSNYIDRST). Residues 20-37 (GLTSKTLKSKSNYIDRST) are compositionally biased toward polar residues. In terms of domain architecture, S4 RNA-binding spans 90–153 (MRLDNTIFRL…ESRSMISKNI (64 aa)).

The protein belongs to the universal ribosomal protein uS4 family. As to quaternary structure, part of the 30S ribosomal subunit. Contacts protein S5. The interaction surface between S4 and S5 is involved in control of translational fidelity.

Its subcellular location is the plastid. It is found in the chloroplast. Its function is as follows. One of the primary rRNA binding proteins, it binds directly to 16S rRNA where it nucleates assembly of the body of the 30S subunit. With S5 and S12 plays an important role in translational accuracy. This Takakia lepidozioides (Moss) protein is Small ribosomal subunit protein uS4c (rps4).